The following is a 711-amino-acid chain: Denticleless protein homolog B (711 aa).

WD repeat units lie at residues 47–89 (GRAV…MQRL), 96–135 (AHTN…LIGE), and 138–178 (GHQC…KDGF). The short motif at 168–171 (WDTR) is the DDB1-binding motif element. The short motif at 197-204 (PSKVKKRK) is the Nuclear localization signal element. 4 WD repeats span residues 215 to 254 (DSQQ…STYR), 270 to 309 (TRKL…TDPV), 314 to 355 (GHQN…AAPI), and 359 to 398 (GHCQ…SEDS). The short motif at 244–247 (WDLR) is the DDB1-binding motif element. Disordered regions lie at residues 473–524 (QTPK…AFTP) and 601–698 (EFDQ…TPGS). Polar residues-rich tracts occupy residues 504–516 (TPKS…SKTP) and 606–627 (LSPS…TLSP). A compositionally biased stretch (basic and acidic residues) spans 631 to 642 (MKSDFVDKENSS). Positions 658–675 (DNSSPQFKSSSSPSSRNS) are enriched in low complexity. Polar residues predominate over residues 684–697 (NAPNSPVSVPTTPG).

Belongs to the WD repeat cdt2 family. As to quaternary structure, component of the DCX(DTL) E3 ubiquitin ligase complex, at least composed of cul4 (cul4a or cul4b), ddb1, dtl/cdt2 and rbx1.

It is found in the nucleus. The protein localises to the cytoplasm. It localises to the cytoskeleton. Its subcellular location is the microtubule organizing center. The protein resides in the centrosome. It is found in the chromosome. It functions in the pathway protein modification; protein ubiquitination. In terms of biological role, substrate-specific adapter of a DCX (DDB1-CUL4-X-box) E3 ubiquitin-protein ligase complex required for cell cycle control, DNA damage response and translesion DNA synthesis. The DCX(DTL) complex, also named CRL4(CDT2) complex, mediates the polyubiquitination and subsequent degradation of CDT1, CDKN1A/p21(CIP1), KMT5A and SDE2. CDT1 degradation in response to DNA damage is necessary to ensure proper cell cycle regulation of DNA replication. CDKN1A/p21(CIP1) degradation during S phase or following UV irradiation is essential to control replication licensing. KMT5A degradation is also important for a proper regulation of mechanisms such as TGF-beta signaling, cell cycle progression, DNA repair and cell migration. Most substrates require their interaction with PCNA for their polyubiquitination: substrates interact with PCNA via their PIP-box, and those containing the 'K+4' motif in the PIP box, recruit the DCX(DTL) complex, leading to their degradation. In undamaged proliferating cells, the DCX(DTL) complex also promotes the 'Lys-164' monoubiquitination of PCNA, thereby being involved in PCNA-dependent translesion DNA synthesis. May play a role in the regulation of the circadian clock. The protein is Denticleless protein homolog B (dtl-b) of Xenopus laevis (African clawed frog).